The sequence spans 331 residues: Ornithine lipid hydroxylase OlsE (331 aa).

Helical transmembrane passes span 13–33 (VSSL…YFAF), 37–57 (MHLL…ALFE), 85–105 (GGVQ…ATVA), 120–140 (WPMA…LYMA), and 189–209 (LLGA…FIGL). A Fatty acid hydroxylase domain is found at 126–260 (VVLGLVIAEF…LVIWDQLLGT (135 aa)).

Belongs to the sterol desaturase family.

Its subcellular location is the cell inner membrane. The protein operates within lipid metabolism. Its function is as follows. Involved in the biosynthesis of ornithine lipids (OLs), which are phosphorus-free membrane lipids. Is responsible for the hydroxylation of OL within the ornithine moiety. This Rhizobium tropici protein is Ornithine lipid hydroxylase OlsE.